Here is a 427-residue protein sequence, read N- to C-terminus: GTPase Obg (427 aa).

The Obg domain maps to 1 to 158 (MFVDIAKIYV…LWVILELKVL (158 aa)). The OBG-type G domain occupies 159–330 (ADVGLIGYPN…VLKRAYELLK (172 aa)). Residues 165-172 (GYPNVGKS), 190-194 (FTTKY), 212-215 (DIPG), 282-285 (NKMD), and 311-313 (SAA) contribute to the GTP site. Positions 172 and 192 each coordinate Mg(2+). Positions 347 to 427 (FVYYKKKDVK…ILDVEFEYYE (81 aa)) constitute an OCT domain.

Belongs to the TRAFAC class OBG-HflX-like GTPase superfamily. OBG GTPase family. In terms of assembly, monomer. Mg(2+) is required as a cofactor.

The protein resides in the cytoplasm. Its function is as follows. An essential GTPase which binds GTP, GDP and possibly (p)ppGpp with moderate affinity, with high nucleotide exchange rates and a fairly low GTP hydrolysis rate. Plays a role in control of the cell cycle, stress response, ribosome biogenesis and in those bacteria that undergo differentiation, in morphogenesis control. The chain is GTPase Obg from Caldicellulosiruptor saccharolyticus (strain ATCC 43494 / DSM 8903 / Tp8T 6331).